The following is a 358-amino-acid chain: Gap junction alpha-5 protein (358 aa).

Residues 1–19 lie on the Cytoplasmic side of the membrane; it reads MGDWSFLGEFLEEVHKHST. A helical transmembrane segment spans residues 20–40; it reads VIGKVWLTVLFIFRMLVLGTA. The Extracellular segment spans residues 41–76; it reads AESSWGDEQADFQCDTMQPGCGNVCYDQAFPISHIR. Residues 77–97 traverse the membrane as a helical segment; the sequence is YWVLQIIFVSTPSLVYMGHAM. Topologically, residues 98-164 are cytoplasmic; the sequence is HTVRMQEKRK…CSILIRTTME (67 aa). The helical transmembrane segment at 165-185 threads the bilayer; the sequence is VAFIVGQYLLYGIFLDTLHVC. The Extracellular segment spans residues 186–205; sequence RRSPCPHPVNCYVSRPTEKN. Residues 206–226 form a helical membrane-spanning segment; the sequence is VFIVFMLAVAALSLFLSLAEL. Residues 227-358 lie on the Cytoplasmic side of the membrane; sequence YHLGWKKLRQ…SKARSDDLSV (132 aa). The interval 318-358 is disordered; it reads AQKPEVPNGASPGHRLPHGYQSDKRRLSKASSKARSDDLSV. Residues serine 353 and serine 357 each carry the phosphoserine modification.

The protein belongs to the connexin family. Alpha-type (group II) subfamily. A connexon is composed of a hexamer of connexins.

Its subcellular location is the cell membrane. It localises to the cell junction. It is found in the gap junction. Its function is as follows. One gap junction consists of a cluster of closely packed pairs of transmembrane channels, the connexons, through which materials of low MW diffuse from one cell to a neighboring cell. In Canis lupus familiaris (Dog), this protein is Gap junction alpha-5 protein (GJA5).